The following is a 428-amino-acid chain: Adenylosuccinate synthetase (428 aa).

GTP contacts are provided by residues 12–18 (GDEGKGK) and 40–42 (GHT). The active-site Proton acceptor is Asp-13. The Mg(2+) site is built by Asp-13 and Gly-40. Residues 13-16 (DEGK), 38-41 (NAGH), Thr-128, Arg-142, Gln-223, Thr-238, and Arg-302 contribute to the IMP site. The Proton donor role is filled by His-41. 298 to 304 (VTTGRPR) is a substrate binding site. GTP-binding positions include Arg-304, 330–332 (KLD), and 412–414 (GVG).

Belongs to the adenylosuccinate synthetase family. Homodimer. Mg(2+) serves as cofactor.

Its subcellular location is the cytoplasm. It catalyses the reaction IMP + L-aspartate + GTP = N(6)-(1,2-dicarboxyethyl)-AMP + GDP + phosphate + 2 H(+). The protein operates within purine metabolism; AMP biosynthesis via de novo pathway; AMP from IMP: step 1/2. Functionally, plays an important role in the de novo pathway of purine nucleotide biosynthesis. Catalyzes the first committed step in the biosynthesis of AMP from IMP. In Halothermothrix orenii (strain H 168 / OCM 544 / DSM 9562), this protein is Adenylosuccinate synthetase.